We begin with the raw amino-acid sequence, 61 residues long: Large ribosomal subunit protein bL32 (61 aa).

Residues 1–16 (MPTPKKKTSRSKRDMR) show a composition bias toward basic residues. Residues 1–47 (MPTPKKKTSRSKRDMRRSHDGLTAPAIAVEKKTGELVRPHRAHKGAD) form a disordered region. Positions 29–38 (VEKKTGELVR) are enriched in basic and acidic residues.

This sequence belongs to the bacterial ribosomal protein bL32 family.

The protein is Large ribosomal subunit protein bL32 of Bdellovibrio bacteriovorus (strain ATCC 15356 / DSM 50701 / NCIMB 9529 / HD100).